A 316-amino-acid polypeptide reads, in one-letter code: Phosducin-like protein 1 (316 aa).

The interval 1–61 (MEQNILNSIL…EDGDKEYEVD (61 aa)) is disordered. Residues 12–41 (KFGDGDQERSDIRHNDSGDENDNHSDHEGN) are compositionally biased toward basic and acidic residues. Residues 49-61 (EGNEDGDKEYEVD) are compositionally biased toward acidic residues. A Phosducin domain is found at 95–290 (SDYAEHREKQ…LLSSYDIIPN (196 aa)). Positions 102–156 (EKQKQKYLQKKYETQKMLEKMCFTTRDQPPPTEEENQLDSDDDDLERIRKARMEQ) form a coiled coil. Positions 175–316 (FGYFKQIDSS…RPESDDDNDD (142 aa)) are thioredoxin fold. The tract at residues 293–316 (KAKNSNWETSLSRKRPESDDDNDD) is disordered.

It belongs to the phosducin family.

The protein resides in the cytoplasm. Functionally, required for normal chemotaxis in response to cAMP and folate. Required for the heterodimerization of the G protein beta and gamma subunits gpbA and gpgA, which is itself thought to be necessary for prenylation of the gamma subunit gpgA and its association with plasma membranes. This Dictyostelium discoideum (Social amoeba) protein is Phosducin-like protein 1 (phlp1).